The primary structure comprises 396 residues: Acetate kinase (396 aa).

Residue Asn8 coordinates Mg(2+). Lys15 provides a ligand contact to ATP. Substrate is bound at residue Arg89. The Proton donor/acceptor role is filled by Asp146. ATP is bound by residues 206–210 (HIGNG), 283–285 (DMR), and 331–335 (GVGEN). Mg(2+) is bound at residue Glu383.

The protein belongs to the acetokinase family. In terms of assembly, homodimer. It depends on Mg(2+) as a cofactor. Mn(2+) serves as cofactor.

It is found in the cytoplasm. It carries out the reaction acetate + ATP = acetyl phosphate + ADP. It participates in metabolic intermediate biosynthesis; acetyl-CoA biosynthesis; acetyl-CoA from acetate: step 1/2. In terms of biological role, catalyzes the formation of acetyl phosphate from acetate and ATP. Can also catalyze the reverse reaction. The chain is Acetate kinase from Streptococcus pneumoniae serotype 2 (strain D39 / NCTC 7466).